The primary structure comprises 100 residues: Urease subunit gamma (100 aa).

The protein belongs to the urease gamma subunit family. In terms of assembly, heterotrimer of UreA (gamma), UreB (beta) and UreC (alpha) subunits. Three heterotrimers associate to form the active enzyme.

It localises to the cytoplasm. It catalyses the reaction urea + 2 H2O + H(+) = hydrogencarbonate + 2 NH4(+). It participates in nitrogen metabolism; urea degradation; CO(2) and NH(3) from urea (urease route): step 1/1. The sequence is that of Urease subunit gamma from Saccharophagus degradans (strain 2-40 / ATCC 43961 / DSM 17024).